We begin with the raw amino-acid sequence, 508 residues long: Cytochrome P450 monooxygenase lepD (508 aa).

Residues Ile-22–Phe-42 form a helical membrane-spanning segment. N-linked (GlcNAc...) asparagine glycosylation is found at Asn-53 and Asn-416. Cys-454 contacts heme.

It belongs to the cytochrome P450 family. Heme is required as a cofactor.

It localises to the membrane. In terms of biological role, cytochrome P450 monooxygenase; part of the gene cluster 23 that mediates the biosynthesis of a family of 2-pyridones known as leporins. The hybrid PKS-NRPS synthetase lepA and the enoyl reductase lepG are responsible for fusion of phenylalanine with a hexaketide and subsequent release of the stable tetramic acid precursor, pre-leporin C. Because lepA lacks a designated enoylreductase (ER) domain, the required activity is provided the enoyl reductase lepG. It is possible that the dehydrogenase lepF also participates in production of pre-leporin C. Cytochrome P450 monooxygenase lepH is then required for the ring expansion step to yield leporin C. Leporin C is then presumably further oxidized by the N-hydroxylase lepD to form leporin B. LepI may possess a function in biosynthesis upstream of lepA. Leporin B is further oxidized in the presence of ferric ion to give the leporin B trimer-iron chelate, but whether or not this reaction is catalyzed by an enzyme in the pathway or by ferric ion is not determined yet. The sequence is that of Cytochrome P450 monooxygenase lepD from Aspergillus flavus (strain ATCC 200026 / FGSC A1120 / IAM 13836 / NRRL 3357 / JCM 12722 / SRRC 167).